We begin with the raw amino-acid sequence, 469 residues long: Sulfate adenylyltransferase subunit 1 (469 aa).

Residues lysine 22–aspartate 236 form the tr-type G domain. The segment at glycine 31–serine 38 is G1. Position 31-38 (glycine 31–serine 38) interacts with GTP. The G2 stretch occupies residues glycine 89–aspartate 93. A G3 region spans residues aspartate 110–glycine 113. GTP contacts are provided by residues aspartate 110–histidine 114 and asparagine 165–aspartate 168. Positions asparagine 165–aspartate 168 are G4. A G5 region spans residues serine 202–leucine 204.

This sequence belongs to the TRAFAC class translation factor GTPase superfamily. Classic translation factor GTPase family. CysN/NodQ subfamily. In terms of assembly, heterodimer composed of CysD, the smaller subunit, and CysN.

The enzyme catalyses sulfate + ATP + H(+) = adenosine 5'-phosphosulfate + diphosphate. The protein operates within sulfur metabolism; hydrogen sulfide biosynthesis; sulfite from sulfate: step 1/3. With CysD forms the ATP sulfurylase (ATPS) that catalyzes the adenylation of sulfate producing adenosine 5'-phosphosulfate (APS) and diphosphate, the first enzymatic step in sulfur assimilation pathway. APS synthesis involves the formation of a high-energy phosphoric-sulfuric acid anhydride bond driven by GTP hydrolysis by CysN coupled to ATP hydrolysis by CysD. The sequence is that of Sulfate adenylyltransferase subunit 1 from Shewanella woodyi (strain ATCC 51908 / MS32).